A 426-amino-acid chain; its full sequence is ORC1-type DNA replication protein 1 (426 aa).

Residues 62-66 (VGKTL), Tyr-211, and Arg-223 each bind ATP.

Belongs to the CDC6/cdc18 family.

In terms of biological role, involved in regulation of DNA replication. In Haloarcula marismortui (strain ATCC 43049 / DSM 3752 / JCM 8966 / VKM B-1809) (Halobacterium marismortui), this protein is ORC1-type DNA replication protein 1 (cdc6a).